The primary structure comprises 260 residues: Ubiquinone/menaquinone biosynthesis C-methyltransferase UbiE (260 aa).

S-adenosyl-L-methionine is bound by residues Thr83, Asp104, 132 to 133 (NA), and Ser149.

The protein belongs to the class I-like SAM-binding methyltransferase superfamily. MenG/UbiE family.

It carries out the reaction a 2-demethylmenaquinol + S-adenosyl-L-methionine = a menaquinol + S-adenosyl-L-homocysteine + H(+). It catalyses the reaction a 2-methoxy-6-(all-trans-polyprenyl)benzene-1,4-diol + S-adenosyl-L-methionine = a 5-methoxy-2-methyl-3-(all-trans-polyprenyl)benzene-1,4-diol + S-adenosyl-L-homocysteine + H(+). The protein operates within quinol/quinone metabolism; menaquinone biosynthesis; menaquinol from 1,4-dihydroxy-2-naphthoate: step 2/2. It participates in cofactor biosynthesis; ubiquinone biosynthesis. Functionally, methyltransferase required for the conversion of demethylmenaquinol (DMKH2) to menaquinol (MKH2) and the conversion of 2-polyprenyl-6-methoxy-1,4-benzoquinol (DDMQH2) to 2-polyprenyl-3-methyl-6-methoxy-1,4-benzoquinol (DMQH2). The protein is Ubiquinone/menaquinone biosynthesis C-methyltransferase UbiE of Vibrio vulnificus (strain CMCP6).